Reading from the N-terminus, the 348-residue chain is UDP-rhamnose/UDP-galactose transporter 2 (348 aa).

10 helical membrane passes run 12 to 32, 44 to 64, 81 to 101, 104 to 124, 133 to 153, 160 to 180, 196 to 216, 230 to 250, 257 to 277, and 286 to 306; these read AVSD…IIMA, FSFA…VGMV, LLWF…SLML, VGFY…MEWV, EVKA…VTDV, FICA…IGSL, APIQ…FLSG, LCIL…YLCI, SFQV…WLIF, and IAGM…VELE.

Belongs to the TPT transporter family. TPT (TC 2.A.7.9) subfamily.

It is found in the golgi apparatus membrane. Functionally, nucleotide-sugar transporter that transports UDP-rhamnose or UDP-galactose and UMP in a strict counter-exchange mode. This Arabidopsis thaliana (Mouse-ear cress) protein is UDP-rhamnose/UDP-galactose transporter 2.